Here is a 134-residue protein sequence, read N- to C-terminus: Probable 4-amino-4-deoxy-L-arabinose-phosphoundecaprenol flippase subunit ArnF (134 aa).

Residues 1–5 are Cytoplasmic-facing; sequence MNRRR. The chain crosses the membrane as a helical span at residues 6-26; sequence GILFALASVLLVSVAQLSMRW. Topologically, residues 27-45 are periplasmic; the sequence is SMTRLPRPDQWLSVPSVDS. Residues 46–66 form a helical membrane-spanning segment; it reads VALAVVLAAIFAYALSMLCWL. The Cytoplasmic segment spans residues 67 to 77; that stretch reads AALRDLPLGRA. Residues 78-98 traverse the membrane as a helical segment; that stretch reads YSLLSISYALVYLLAASLPLF. Topologically, residues 99–101 are periplasmic; sequence NES. A helical membrane pass occupies residues 102–122; that stretch reads FSFSKSLGVALVMLGVITINT. The Cytoplasmic segment spans residues 123–134; that stretch reads RPARAPELRSSP.

This sequence belongs to the ArnF family. Heterodimer of ArnE and ArnF.

The protein localises to the cell inner membrane. Its pathway is bacterial outer membrane biogenesis; lipopolysaccharide biosynthesis. Its function is as follows. Translocates 4-amino-4-deoxy-L-arabinose-phosphoundecaprenol (alpha-L-Ara4N-phosphoundecaprenol) from the cytoplasmic to the periplasmic side of the inner membrane. The polypeptide is Probable 4-amino-4-deoxy-L-arabinose-phosphoundecaprenol flippase subunit ArnF (Pseudomonas fluorescens (strain Pf0-1)).